The sequence spans 93 residues: UPF0358 protein lwe1048 (93 aa).

This sequence belongs to the UPF0358 family.

In Listeria welshimeri serovar 6b (strain ATCC 35897 / DSM 20650 / CCUG 15529 / CIP 8149 / NCTC 11857 / SLCC 5334 / V8), this protein is UPF0358 protein lwe1048.